We begin with the raw amino-acid sequence, 113 residues long: Large ribosomal subunit protein bL17 (113 aa).

It belongs to the bacterial ribosomal protein bL17 family. As to quaternary structure, part of the 50S ribosomal subunit. Contacts protein L32.

In Clostridium botulinum (strain ATCC 19397 / Type A), this protein is Large ribosomal subunit protein bL17.